The primary structure comprises 97 residues: Eclosion hormone (97 aa).

The N-terminal stretch at M1 to C17 is a signal peptide. Disulfide bonds link C48/C72, C52/C68, and C55/C83.

Belongs to the insect eclosion hormone family. In terms of tissue distribution, expressed in a single pair of brain neurons which extend their processes the entire length of the central nervous system and also to the corpora cardiaca portion of the ring gland. These cells show massive depletion of immunoreactive Eh at ecdysis.

Its subcellular location is the secreted. In terms of biological role, neuropeptide that triggers the performance of ecdysis behaviors at the end of a molt. It triggers adult behavior patterns: larval, pupal and adult ecdysis, and plasticization during the molt. In Drosophila melanogaster (Fruit fly), this protein is Eclosion hormone (Eh).